Consider the following 279-residue polypeptide: Energy-coupling factor transporter ATP-binding protein EcfA1 (279 aa).

The ABC transporter domain occupies 5–240 (IELKKVTFNY…GDELLQLGLD (236 aa)). Residue 40–47 (GHNGSGKS) participates in ATP binding.

The protein belongs to the ABC transporter superfamily. Energy-coupling factor EcfA family. As to quaternary structure, forms a stable energy-coupling factor (ECF) transporter complex composed of 2 membrane-embedded substrate-binding proteins (S component), 2 ATP-binding proteins (A component) and 2 transmembrane proteins (T component).

The protein localises to the cell membrane. Its function is as follows. ATP-binding (A) component of a common energy-coupling factor (ECF) ABC-transporter complex. Unlike classic ABC transporters this ECF transporter provides the energy necessary to transport a number of different substrates. In Streptococcus pyogenes serotype M5 (strain Manfredo), this protein is Energy-coupling factor transporter ATP-binding protein EcfA1.